The primary structure comprises 559 residues: Polypeptide N-acetylgalactosaminyltransferase 1 (559 aa).

Over 1-8 the chain is Cytoplasmic; that stretch reads MRKFAYCK. A helical; Signal-anchor for type II membrane protein transmembrane segment spans residues 9–28; that stretch reads VVLATSLVWVLLDMFLLLYF. The Lumenal segment spans residues 29-559; the sequence is SECNKCEEKK…LRNVTLPEIF (531 aa). The N-linked (GlcNAc...) asparagine glycan is linked to Asn-95. Intrachain disulfides connect Cys-106–Cys-339, Cys-330–Cys-408, Cys-442–Cys-459, Cys-482–Cys-497, and Cys-523–Cys-540. Residues 115–225 form a catalytic subdomain A region; it reads LPTTSVVIVF…VGWLEPLLAR (111 aa). Substrate contacts are provided by Asp-156 and Arg-186. Residues Asp-209 and His-211 each contribute to the Mn(2+) site. The interval 285–347 is catalytic subdomain B; that stretch reads PVRTPTMAGG…TCSHVGHVFR (63 aa). Trp-316 is a binding site for substrate. His-344 serves as a coordination point for Mn(2+). Substrate is bound by residues Arg-347 and Tyr-352. A Ricin B-type lectin domain is found at 429 to 551; that stretch reads FSLGEIRNVE…GSRSQQWLLR (123 aa). Asn-552 carries N-linked (GlcNAc...) asparagine glycosylation.

This sequence belongs to the glycosyltransferase 2 family. GalNAc-T subfamily. Mn(2+) is required as a cofactor. Heart, brain, spleen, liver, skeletal muscle and kidney.

Its subcellular location is the golgi apparatus. It localises to the golgi stack membrane. The protein resides in the secreted. The enzyme catalyses L-seryl-[protein] + UDP-N-acetyl-alpha-D-galactosamine = a 3-O-[N-acetyl-alpha-D-galactosaminyl]-L-seryl-[protein] + UDP + H(+). It catalyses the reaction L-threonyl-[protein] + UDP-N-acetyl-alpha-D-galactosamine = a 3-O-[N-acetyl-alpha-D-galactosaminyl]-L-threonyl-[protein] + UDP + H(+). It participates in protein modification; protein glycosylation. In terms of biological role, catalyzes the initial reaction in O-linked oligosaccharide biosynthesis, the transfer of an N-acetyl-D-galactosamine residue to a serine or threonine residue on the protein receptor. Has a broad spectrum of substrates such as apomucin-, MUC5AC-, MUC1- and MUC2-derived peptides. The sequence is that of Polypeptide N-acetylgalactosaminyltransferase 1 from Rattus norvegicus (Rat).